The chain runs to 418 residues: Protein fuzzy homolog (418 aa).

It belongs to the fuzzy family. As to quaternary structure, interacts with rsg1. Interacts with intu and wdpcp; fuz, intu and wdpcp probably form the core CPLANE (ciliogenesis and planar polarity effectors) complex.

The protein resides in the cytoplasm. The protein localises to the cytoskeleton. Its subcellular location is the cilium basal body. Its function is as follows. Probable planar cell polarity effector involved in cilium biogenesis. Proposed to function as core component of the CPLANE (ciliogenesis and planar polarity effectors) complex involved in the recruitment of peripheral IFT-A proteins to basal bodies. May regulate protein and membrane transport to the cilium. May control the organization of the apical actin cytoskeleton, which is essential for the normal orientation of elongating ciliary microtubules. This is Protein fuzzy homolog (fuz) from Xenopus tropicalis (Western clawed frog).